The sequence spans 133 residues: Small ribosomal subunit protein bS6 (133 aa).

The interval Lys93 to Ala133 is disordered. Residues Met103–Ala133 are compositionally biased toward basic and acidic residues.

The protein belongs to the bacterial ribosomal protein bS6 family.

Its function is as follows. Binds together with bS18 to 16S ribosomal RNA. This is Small ribosomal subunit protein bS6 from Alteromonas mediterranea (strain DSM 17117 / CIP 110805 / LMG 28347 / Deep ecotype).